The following is a 187-amino-acid chain: Urease accessory protein UreE (187 aa).

The tract at residues 154–187 (RANSAQGHGHSHGHSHSHDHHGYHHHGDGNWHKH) is disordered. Positions 162-177 (GHSHGHSHSHDHHGYH) are enriched in basic residues. Basic and acidic residues predominate over residues 178 to 187 (HHGDGNWHKH).

This sequence belongs to the UreE family.

It localises to the cytoplasm. Involved in urease metallocenter assembly. Binds nickel. Probably functions as a nickel donor during metallocenter assembly. The protein is Urease accessory protein UreE of Actinobacillus pleuropneumoniae (Haemophilus pleuropneumoniae).